Reading from the N-terminus, the 4250-residue chain is Dynein axonemal heavy chain 1 (4250 aa).

Residues methionine 1–lysine 73 are disordered. The tract at residues methionine 1–isoleucine 1527 is stem. Over residues proline 24–arginine 42 the composition is skewed to basic and acidic residues. A compositionally biased stretch (pro residues) spans asparagine 46–proline 55. 4 AAA regions span residues tyrosine 1528–alanine 1749, glutamine 1809–lysine 2042, threonine 2174–glycine 2434, and aspartate 2532–histidine 2784. Residues glycine 1566 to threonine 1573 carry the GPAGTGKT motif motif. Glycine 1566 to threonine 1573 contributes to the ATP binding site. Positions cysteine 1616–arginine 1622 match the CFDEFNR motif motif. Residues glycine 1847–serine 1854, glycine 2212–threonine 2219, and glycine 2571–serine 2578 each bind ATP. Residues phenylalanine 2799–cysteine 3097 are stalk. Residues leucine 3045–methionine 3128 adopt a coiled-coil conformation. AAA regions lie at residues leucine 3182–alanine 3412 and methionine 3625–methionine 3844.

Belongs to the dynein heavy chain family. Consists of at least two heavy chains and a number of intermediate and light chains.

The protein resides in the cytoplasm. Its subcellular location is the cytoskeleton. It localises to the cilium axoneme. The protein localises to the cell projection. It is found in the cilium. The protein resides in the flagellum. Force generating protein of cilia required for sperm flagellum motility. Produces force towards the minus ends of microtubules. Dynein has ATPase activity; the force-producing power stroke is thought to occur on release of ADP. Required in spermatozoa for the formation of the inner dynein arms and biogenesis of the axoneme. The protein is Dynein axonemal heavy chain 1 of Mus musculus (Mouse).